A 2298-amino-acid chain; its full sequence is Non-reducing polyketide synthase pgmA (2298 aa).

The segment at 8-333 (LFIFGDQTLD…IYNVLKQSPL (326 aa)) is N-terminal acylcarrier protein transacylase domain (SAT). The segment at 336–361 (YLSSKPAQSRQPVSNEGAPEPGNGRQ) is disordered. Residues 340-349 (KPAQSRQPVS) are compositionally biased toward polar residues. The Ketosynthase family 3 (KS3) domain maps to 360–798 (RQKLAIIGMS…GGNSALLVED (439 aa)). Active-site for beta-ketoacyl synthase activity residues include C532, H667, and H714. Residues 901 to 1193 (VFAFTGQGAH…GMVKGVLGPQ (293 aa)) form an acyl/malonyl transferases region. S994 functions as the For acyl/malonyl transferase activity in the catalytic mechanism. The tract at residues 1283-1415 (HRVVEETHDS…CVVRFRDRGL (133 aa)) is N-terminal hotdog fold. Residues 1283–1589 (HRVVEETHDS…IQGVPRRVLK (307 aa)) form the PKS/mFAS DH domain. The product template (PT) domainn stretch occupies residues 1294 to 1586 (KTRIVIEADI…QISIQGVPRR (293 aa)). H1315 (proton acceptor; for dehydratase activity) is an active-site residue. Residues 1438–1589 (VTGETARFNR…IQGVPRRVLK (152 aa)) form a C-terminal hotdog fold region. Catalysis depends on D1502, which acts as the Proton donor; for dehydratase activity. A disordered region spans residues 1619–1642 (YPVANGHAQATPTSGPVNGEPRPS). The Carrier 1 domain occupies 1641 to 1716 (PSRFPRALEI…SLRALLSEPE (76 aa)). O-(pantetheine 4'-phosphoryl)serine is present on S1675. A disordered region spans residues 1716 to 1762 (ERSTNGMPAASAKDTSRFDEIPPMNGHKTNGHVMNGHSNGSSNGLPD). Over residues 1751 to 1760 (GHSNGSSNGL) the composition is skewed to polar residues. In terms of domain architecture, Carrier 2 spans 1765–1840 (KVDFQRVLQI…DLKRYLFPQD (76 aa)). S1799 bears the O-(pantetheine 4'-phosphoryl)serine mark. The reductase (R) domain stretch occupies residues 1927–2178 (VTGASGSLGG…YWTPVEEVAG (252 aa)).

The protein operates within pigment biosynthesis. Its pathway is secondary metabolite biosynthesis. Its function is as follows. Non-reducing polyketide synthase; part of the gene cluster that mediates the biosynthesis of pleosporalin A, ascomycone A, as well as a third cryptic naphthoquinone derived pigment, all responsible for the coloration of conidia. The non-reducing polyketide synthase pgmA is responsible for the condensation of seven acetyl-CoA units to produce the cyclized heptaketide 3-acetonyl-1,6,8-trihydroxy-2-naphthaldehyde. The pathway begins with the biosynthesis of the cyclized heptaketide 3-acetonyl-1,6,8-trihydroxy-2-naphthaldehyde by the NR-PKS pgmA. The C-6 hydroxyl group is further methylated by the O-methyltransferase pgmB to yield fusarubinaldehyde which is in turn oxidized by the cytochrome P450 monooxygenase pgmC at C-9. The C-1 hydroxyl group is then methylated spontaneously. Although pgmE, pgmD and pgmH are essential for the production of pleosporalin A, it is not the case for the 2 other final products and it remains difficult to assign a specific function to each enzyme. PgmF and pgmG seem not to be involved in pigment biosynthesis although they were regulated by the cluster-specific transcription factor pgmR. This is Non-reducing polyketide synthase pgmA from Aspergillus terreus (strain NIH 2624 / FGSC A1156).